The primary structure comprises 288 residues: MSSSMWYIMQSIQSKYSLSERLIRTIAAIRSFPHDNVEDLIRGGADVNCTHGTLKPLHCACMVSDADCVELLLEKGAEVNALDGYNRTALHYAAEKDEACVEVLLEYGANPNALDGNRDTPLHWAAFKNNAECVRALLESGASVNALDYNNDTPLSWAAMKGNLESVSILLDYGAEVRVINLIGQTPISRLVALLVRGLGTEKEDSCFELLHRAVGHFELRKNGTMPREVARDPQLCEKLTVLCSAPGTLKTLARYTVRRSLGLQYLPDAVKGLPLPASLKEYLLLLE.

Serine 17 carries the phosphoserine modification. ANK repeat units follow at residues 52-81 (GTLK…EVNA), 85-113 (YNRT…NPNA), 117-146 (NRDT…SVNA), and 150-179 (NNDT…EVRV). An SOCS box domain is found at 235–288 (QLCEKLTVLCSAPGTLKTLARYTVRRSLGLQYLPDAVKGLPLPASLKEYLLLLE).

The protein belongs to the ankyrin SOCS box (ASB) family. As to quaternary structure, interacts with TBK1; this interaction promotes TBK1 proteasomal degradation. In terms of processing, phosphorylated by TBK1.

Its subcellular location is the cytoplasm. Its pathway is protein modification; protein ubiquitination. May be a substrate-recognition component of a SCF-like ECS (Elongin-Cullin-SOCS-box protein) E3 ubiquitin-protein ligase complex which mediates the ubiquitination and subsequent proteasomal degradation of target proteins. Inhibits IFN-beta production through the IRF3 signaling pathway by targeting TBK1 via 'Lys-48'-linked ubiquitination, leading to its proteasomal degradation. In Pongo abelii (Sumatran orangutan), this protein is Ankyrin repeat and SOCS box protein 8 (ASB8).